A 203-amino-acid polypeptide reads, in one-letter code: A-type ATP synthase subunit E (203 aa).

It belongs to the V-ATPase E subunit family. In terms of assembly, has multiple subunits with at least A(3), B(3), C, D, E, F, H, I and proteolipid K(x).

It localises to the cell membrane. Its function is as follows. Component of the A-type ATP synthase that produces ATP from ADP in the presence of a proton gradient across the membrane. The protein is A-type ATP synthase subunit E of Thermococcus kodakarensis (strain ATCC BAA-918 / JCM 12380 / KOD1) (Pyrococcus kodakaraensis (strain KOD1)).